The following is a 590-amino-acid chain: Beta-fructofuranosidase, insoluble isoenzyme 4 (590 aa).

Residues 1 to 28 (MVMAPIPQPWHQWPFLILFFLVLFSCES) form the signal peptide. Substrate-binding positions include 71 to 74 (WIND) and Gln90. Asp74 is an active-site residue. An N-linked (GlcNAc...) asparagine glycan is attached at Asn94. Substrate contacts are provided by residues Trp98 and 133–134 (WT). Asn167 carries N-linked (GlcNAc...) asparagine glycosylation. 198 to 199 (RD) lines the substrate pocket. Asn247 carries N-linked (GlcNAc...) asparagine glycosylation. Substrate is bound by residues Glu253 and Asp287. Asn345 carries an N-linked (GlcNAc...) asparagine glycan. Cys445 and Cys491 form a disulfide bridge. Asn565 carries N-linked (GlcNAc...) asparagine glycosylation.

It belongs to the glycosyl hydrolase 32 family. Expressed in leaves. Expressed at moderate levels in roots and flowers, and weakly in seeds.

The protein localises to the secreted. Its subcellular location is the extracellular space. The protein resides in the apoplast. It is found in the cell wall. It catalyses the reaction Hydrolysis of terminal non-reducing beta-D-fructofuranoside residues in beta-D-fructofuranosides.. May play a role in sucrose partitioning during seed development and in stress response. The sequence is that of Beta-fructofuranosidase, insoluble isoenzyme 4 (CIN4) from Oryza sativa subsp. japonica (Rice).